The following is a 416-amino-acid chain: Serine hydroxymethyltransferase 1 (416 aa).

Residues leucine 121 and 125 to 127 contribute to the (6S)-5,6,7,8-tetrahydrofolate site; that span reads GHL. Lysine 229 is modified (N6-(pyridoxal phosphate)lysine). (6S)-5,6,7,8-tetrahydrofolate-binding positions include glutamate 245 and 354–356; that span reads SPF.

This sequence belongs to the SHMT family. In terms of assembly, homodimer. It depends on pyridoxal 5'-phosphate as a cofactor.

Its subcellular location is the cytoplasm. It carries out the reaction (6R)-5,10-methylene-5,6,7,8-tetrahydrofolate + glycine + H2O = (6S)-5,6,7,8-tetrahydrofolate + L-serine. Its pathway is one-carbon metabolism; tetrahydrofolate interconversion. It functions in the pathway amino-acid biosynthesis; glycine biosynthesis; glycine from L-serine: step 1/1. Its function is as follows. Catalyzes the reversible interconversion of serine and glycine with tetrahydrofolate (THF) serving as the one-carbon carrier. This reaction serves as the major source of one-carbon groups required for the biosynthesis of purines, thymidylate, methionine, and other important biomolecules. Also exhibits THF-independent aldolase activity toward beta-hydroxyamino acids, producing glycine and aldehydes, via a retro-aldol mechanism. This Vibrio vulnificus (strain CMCP6) protein is Serine hydroxymethyltransferase 1.